We begin with the raw amino-acid sequence, 442 residues long: Transducin beta-like protein 2 (442 aa).

The interval 36–71 (EKPSQPVCQKENEPKKSGSKKQKQNQRVRKEKPQQH) is disordered. Basic residues predominate over residues 52–65 (SGSKKQKQNQRVRK). WD repeat units follow at residues 84 to 123 (SHSGNISCMDFSSNGKYLATCADDRTVRIWSTKDFLQREH), 130 to 170 (VELD…DGGF), 182 to 222 (KHKA…STIN), 224 to 263 (NQMNNSHAVISPCSRFVGSCGFTPDVKVWEVCFGKKGEFQ), 273 to 312 (GHSASVHSFAFSNDSRRMASVSKDGTWKLWDTDVEYKKQQ), 323 to 362 (EEASTMPCRLALSPDTHVLALATGTNIHLFNTRRGEKEEY), and 366 to 404 (VHGECIADLTFDITGRFLASCGDRAVRLFHNTPGHRAVV). Residue K164 forms a Glycyl lysine isopeptide (Lys-Gly) (interchain with G-Cter in SUMO2) linkage. T428 is subject to Phosphothreonine.

This chain is Transducin beta-like protein 2 (Tbl2), found in Mus musculus (Mouse).